The following is a 125-amino-acid chain: Small ribosomal subunit protein uS13 (125 aa).

The segment at 90 to 125 (QRHRKGLPVRGQRTKTNARTRKGPKRTVAGKKKATK) is disordered.

It belongs to the universal ribosomal protein uS13 family. Part of the 30S ribosomal subunit. Forms a loose heterodimer with protein S19. Forms two bridges to the 50S subunit in the 70S ribosome.

Functionally, located at the top of the head of the 30S subunit, it contacts several helices of the 16S rRNA. In the 70S ribosome it contacts the 23S rRNA (bridge B1a) and protein L5 of the 50S subunit (bridge B1b), connecting the 2 subunits; these bridges are implicated in subunit movement. Contacts the tRNAs in the A and P-sites. The polypeptide is Small ribosomal subunit protein uS13 (Bifidobacterium longum subsp. infantis (strain ATCC 15697 / DSM 20088 / JCM 1222 / NCTC 11817 / S12)).